We begin with the raw amino-acid sequence, 486 residues long: Outer dynein arm-docking complex subunit 4 (486 aa).

TPR repeat units follow at residues 14 to 47, 49 to 81, and 82 to 115; these read FTTY…QPDD, NCLV…NKNY, and FKGL…RPEL. The interval 153–180 is disordered; the sequence is GVHPQNLNPSNKKESKKHSKKTDKGEKT. 4 TPR repeats span residues 314 to 347, 354 to 387, 391 to 424, and 431 to 464; these read GNLH…AKKC, SRAL…ACGG, AWLF…ADDI, and LNAS…AKLL.

In terms of assembly, component of the outer dynein arm-docking complex along with ODAD1, ODAD2 and ODAD3.

The protein resides in the cytoplasm. Its subcellular location is the cytoskeleton. It is found in the cilium axoneme. Functionally, component of the outer dynein arm-docking complex (ODA-DC) that mediates outer dynein arms (ODA) binding onto the doublet microtubule. Plays an essential role for the assembly of ODA-DC and in the docking of ODA in ciliary axoneme. This Danio rerio (Zebrafish) protein is Outer dynein arm-docking complex subunit 4 (odad4).